Reading from the N-terminus, the 166-residue chain is Large ribosomal subunit protein uL10 (166 aa).

This sequence belongs to the universal ribosomal protein uL10 family. As to quaternary structure, part of the ribosomal stalk of the 50S ribosomal subunit. The N-terminus interacts with L11 and the large rRNA to form the base of the stalk. The C-terminus forms an elongated spine to which L12 dimers bind in a sequential fashion forming a multimeric L10(L12)X complex.

Functionally, forms part of the ribosomal stalk, playing a central role in the interaction of the ribosome with GTP-bound translation factors. The chain is Large ribosomal subunit protein uL10 from Shouchella clausii (strain KSM-K16) (Alkalihalobacillus clausii).